We begin with the raw amino-acid sequence, 368 residues long: Germination protease (368 aa).

A propeptide spanning residues 1 to 16 (MKKSELDVNQYLIRTD) is cleaved from the precursor.

This sequence belongs to the peptidase A25 family. As to quaternary structure, homotetramer. Post-translationally, autoproteolytically processed. The inactive tetrameric zymogen termed p46 autoprocesses to a smaller form termed p41, which is active only during spore germination.

The enzyme catalyses Endopeptidase action with P4 Glu or Asp, P1 preferably Glu &gt; Asp, P1' hydrophobic and P2' Ala.. In terms of biological role, initiates the degradation of small, acid-soluble proteins during spore germination. The protein is Germination protease (gpr) of Bacillus subtilis (strain 168).